Reading from the N-terminus, the 246-residue chain is Putative carboxymethylenebutenolidase (246 aa).

Catalysis depends on residues Cys127, Asp183, and His215.

This sequence belongs to the dienelactone hydrolase family.

The enzyme catalyses 2-(5-oxo-2,5-dihydrofuran-2-ylidene)acetate + H2O = 4-oxohex-2-enedioate + H(+). This chain is Putative carboxymethylenebutenolidase, found in Synechocystis sp. (strain ATCC 27184 / PCC 6803 / Kazusa).